We begin with the raw amino-acid sequence, 733 residues long: Ribosomal protein S6 kinase alpha-2 (733 aa).

Residues 59–318 form the Protein kinase 1 domain; it reads FELLKVLGQG…VEEIKRHPFF (260 aa). Residues 65–73 and K91 contribute to the ATP site; that span reads LGQGSYGKV. D184 functions as the Proton acceptor in the catalytic mechanism. S218 carries the post-translational modification Phosphoserine; by PDPK1. The AGC-kinase C-terminal domain maps to 319–388; it reads VTIDWNTLYR…VASSLIQEPS (70 aa). S377 bears the Phosphoserine mark. One can recognise a Protein kinase 2 domain in the interval 415-672; it reads YEIKEDIGVG…AMQVLKHPWV (258 aa). Residues 421 to 429 and K444 contribute to the ATP site; that span reads IGVGSYSVC. Catalysis depends on D532, which acts as the Proton acceptor.

It belongs to the protein kinase superfamily. AGC Ser/Thr protein kinase family. S6 kinase subfamily. In terms of assembly, forms a complex with either MAPK1/ERK2 or MAPK3/ERK1 in quiescent cells. Transiently dissociates following mitogenic stimulation. Interacts with FBXO5; cooperate to induce the metaphase arrest of early blastomeres; increases and stabilizes interaction of FBXO5 with CDC20. It depends on Mg(2+) as a cofactor. In terms of processing, activated by phosphorylation at Ser-218 by PDPK1. Autophosphorylated on Ser-377, as part of the activation process. May be phosphorylated at Thr-356 and Ser-360 by MAPK1/ERK2 and MAPK3/ERK1. Post-translationally, N-terminal myristoylation results in an activated kinase in the absence of added growth factors. In terms of tissue distribution, widely expressed with higher expression in lung, skeletal muscle, brain, uterus, ovary, thyroid and prostate.

It is found in the nucleus. The protein localises to the cytoplasm. The enzyme catalyses L-seryl-[protein] + ATP = O-phospho-L-seryl-[protein] + ADP + H(+). The catalysed reaction is L-threonyl-[protein] + ATP = O-phospho-L-threonyl-[protein] + ADP + H(+). With respect to regulation, upon extracellular signal or mitogen stimulation, phosphorylated at Thr-570 in the C-terminal kinase domain (CTKD) by MAPK1/ERK2 and MAPK3/ERK1. The activated CTKD then autophosphorylates Ser-377, allowing binding of PDPK1, which in turn phosphorylates Ser-218 in the N-terminal kinase domain (NTDK) leading to the full activation of the protein and subsequent phosphorylation of the substrates by the NTKD. Serine/threonine-protein kinase that acts downstream of ERK (MAPK1/ERK2 and MAPK3/ERK1) signaling and mediates mitogenic and stress-induced activation of transcription factors, regulates translation, and mediates cellular proliferation, survival, and differentiation. May function as tumor suppressor in epithelial ovarian cancer cells. The sequence is that of Ribosomal protein S6 kinase alpha-2 (RPS6KA2) from Homo sapiens (Human).